We begin with the raw amino-acid sequence, 279 residues long: Putative biopolymer transport protein ExbB homolog (279 aa).

A run of 3 helical transmembrane segments spans residues serine 19–leucine 39, isoleucine 126–phenylalanine 146, and isoleucine 162–leucine 182.

The protein belongs to the ExbB/TolQ family.

It is found in the cell membrane. The polypeptide is Putative biopolymer transport protein ExbB homolog (Methanothermobacter thermautotrophicus (strain ATCC 29096 / DSM 1053 / JCM 10044 / NBRC 100330 / Delta H) (Methanobacterium thermoautotrophicum)).